We begin with the raw amino-acid sequence, 392 residues long: Putative nickel insertion protein (392 aa).

This sequence belongs to the LarC family.

This Pelobacter propionicus (strain DSM 2379 / NBRC 103807 / OttBd1) protein is Putative nickel insertion protein.